A 522-amino-acid chain; its full sequence is Putative cysteine ligase BshC (522 aa).

Residues 436 to 469 adopt a coiled-coil conformation; that stretch reads SWAQAEKAKALKQLEDIEKKLRKAEERKHDDVIK.

The protein belongs to the BshC family.

This Cytophaga hutchinsonii (strain ATCC 33406 / DSM 1761 / CIP 103989 / NBRC 15051 / NCIMB 9469 / D465) protein is Putative cysteine ligase BshC.